The sequence spans 184 residues: MKNVTDSFVSLGHWPSAGSFGFNTDIFATNPINLSVVLGVLIFFGKGVLSDLLDNRKQRILSTIRNSEELRGGAIEQLEKARARLRKVEIEADEFRVNGYSEIEREKSNLINAAYENLERLENYKNESIHFEQQRAMNQVRQRVFQQALQGALETLNSYLNSELHLRTISANIGMLGTMKNITD.

Residues 27 to 49 (FATNPINLSVVLGVLIFFGKGVL) form a helical membrane-spanning segment.

Belongs to the ATPase B chain family. As to quaternary structure, F-type ATPases have 2 components, F(1) - the catalytic core - and F(0) - the membrane proton channel. F(1) has five subunits: alpha(3), beta(3), gamma(1), delta(1), epsilon(1). F(0) has four main subunits: a(1), b(1), b'(1) and c(10-14). The alpha and beta chains form an alternating ring which encloses part of the gamma chain. F(1) is attached to F(0) by a central stalk formed by the gamma and epsilon chains, while a peripheral stalk is formed by the delta, b and b' chains.

It is found in the plastid. Its subcellular location is the chloroplast thylakoid membrane. Functionally, f(1)F(0) ATP synthase produces ATP from ADP in the presence of a proton or sodium gradient. F-type ATPases consist of two structural domains, F(1) containing the extramembraneous catalytic core and F(0) containing the membrane proton channel, linked together by a central stalk and a peripheral stalk. During catalysis, ATP synthesis in the catalytic domain of F(1) is coupled via a rotary mechanism of the central stalk subunits to proton translocation. Its function is as follows. Component of the F(0) channel, it forms part of the peripheral stalk, linking F(1) to F(0). The sequence is that of ATP synthase subunit b, chloroplastic from Amborella trichopoda.